The sequence spans 322 residues: Transaldolase (322 aa).

K132 functions as the Schiff-base intermediate with substrate in the catalytic mechanism. Phosphoserine occurs at positions 268 and 269.

It belongs to the transaldolase family. Type 1 subfamily. Homodimer.

It carries out the reaction D-sedoheptulose 7-phosphate + D-glyceraldehyde 3-phosphate = D-erythrose 4-phosphate + beta-D-fructose 6-phosphate. The protein operates within carbohydrate degradation; pentose phosphate pathway; D-glyceraldehyde 3-phosphate and beta-D-fructose 6-phosphate from D-ribose 5-phosphate and D-xylulose 5-phosphate (non-oxidative stage): step 2/3. Its function is as follows. Transaldolase is important for the balance of metabolites in the pentose-phosphate pathway. The sequence is that of Transaldolase (tal1) from Schizosaccharomyces pombe (strain 972 / ATCC 24843) (Fission yeast).